Here is a 329-residue protein sequence, read N- to C-terminus: o-succinylbenzoate synthase (329 aa).

The active-site Proton donor is the K140. Mg(2+) contacts are provided by D168, E197, and D220. K242 serves as the catalytic Proton acceptor.

The protein belongs to the mandelate racemase/muconate lactonizing enzyme family. MenC type 1 subfamily. The cofactor is a divalent metal cation.

It catalyses the reaction (1R,6R)-6-hydroxy-2-succinyl-cyclohexa-2,4-diene-1-carboxylate = 2-succinylbenzoate + H2O. The protein operates within quinol/quinone metabolism; 1,4-dihydroxy-2-naphthoate biosynthesis; 1,4-dihydroxy-2-naphthoate from chorismate: step 4/7. It functions in the pathway quinol/quinone metabolism; menaquinone biosynthesis. Its function is as follows. Converts 2-succinyl-6-hydroxy-2,4-cyclohexadiene-1-carboxylate (SHCHC) to 2-succinylbenzoate (OSB). This chain is o-succinylbenzoate synthase, found in Haemophilus influenzae (strain ATCC 51907 / DSM 11121 / KW20 / Rd).